Here is a 286-residue protein sequence, read N- to C-terminus: MSSPSFINKLALPNLATITQYPALTVGLSVFTFLLLVIDLCSNQALSQKFSLYPNAPFEFDLNRLSFYLLFHRGFTHWLLNVVGLFSPLAIFERTNGTVFTGVTLNVLAVTAGLQFCIVGKLLYPNTQVIGLSGVVFSFMSFMAYKEHHTTPVIYTFKYQGSEVSIPTLYSPFIFLIVCMVLIPGSSFWGHLAGISSGYLLALGYIKFLYPPSKAILFIERKLQTPINALRSLVVYYKEEEAIEQRGVSYNPLLSSDPESALNDIPVTTGARTNSFAGEGQVLGAT.

6 helical membrane passes run 18 to 38 (ITQY…LLVI), 66 to 86 (SFYL…VGLF), 99 to 119 (VFTG…FCIV), 122 to 142 (LLYP…FMSF), 164 to 183 (VSIP…MVLI), and 188 to 210 (FWGH…KFLY). The Nucleophile role is filled by serine 133. Histidine 191 is a catalytic residue.

This sequence belongs to the peptidase S54 family.

It localises to the golgi apparatus membrane. It is found in the golgi apparatus. The protein localises to the cis-Golgi network membrane. It catalyses the reaction Cleaves type-1 transmembrane domains using a catalytic dyad composed of serine and histidine that are contributed by different transmembrane domains.. Functionally, probable rhomboid-type serine protease that catalyzes intramembrane proteolysis. This chain is Rhomboid-type serine protease 2 (RBD2), found in Debaryomyces hansenii (strain ATCC 36239 / CBS 767 / BCRC 21394 / JCM 1990 / NBRC 0083 / IGC 2968) (Yeast).